The following is a 416-amino-acid chain: Prostate tumor-overexpressed gene 1 protein (416 aa).

Positions 1–53 are disordered; that stretch reads MVRPRRAPYRSGAGGPLGGRGRPPRPLVVRAVRSRSWPASPRGPQPPRIRARS. A compositionally biased stretch (gly residues) spans 12 to 21; it reads GAGGPLGGRG. Over residues 27 to 36 the composition is skewed to low complexity; it reads LVVRAVRSRS. Ser-53 is subject to Phosphoserine. The segment at 184 to 416 is interaction with FLOT1; it reads NGFAGCMLFP…QEQQQRGMGG (233 aa).

This sequence belongs to the Mediator complex subunit 25 family. PTOV1 subfamily. As to quaternary structure, may interact with CREBBP. Interacts with FLOT1. Ubiquitinated by the CRL2(KLHDC2) complex, which recognizes the diglycine (Gly-Gly) at the C-terminus, leading to its degradation. Ubiquitinated by the CRL2(APPBP2) complex, which recognizes the Arg-Xaa-Xaa-Gly sequence at the C-terminus, leading to its degradation. As to expression, expressed in brain, heart, kidney, liver, placenta, skeletal muscle and small intestine.

It localises to the cytoplasm. The protein localises to the nucleus. The protein resides in the cell membrane. Its subcellular location is the perinuclear region. In terms of biological role, may activate transcription. Required for nuclear translocation of FLOT1. Promotes cell proliferation. The protein is Prostate tumor-overexpressed gene 1 protein (PTOV1) of Homo sapiens (Human).